Consider the following 451-residue polypeptide: AAA-ATPase At3g50940 (451 aa).

The signal sequence occupies residues 1–25 (MSSSSESHLATAKTALTAVASVAAA). 254–261 (GPPGTGKS) contacts ATP.

It belongs to the AAA ATPase family. BCS1 subfamily. Mg(2+) serves as cofactor.

The catalysed reaction is ATP + H2O = ADP + phosphate + H(+). The polypeptide is AAA-ATPase At3g50940 (Arabidopsis thaliana (Mouse-ear cress)).